A 498-amino-acid polypeptide reads, in one-letter code: MRINPTTSGPGVSTLEEKNLGRIAQIIGPVLDVAFPPGKMPNIYNALVVKGRDTVGQQINVTCEVQQLLGNNRVRAVAMSATDGLMRGMEVIDTGAPLSVPVGGATLGRIFNVLGEPVDNLGPVDTRTTSPIHRSAPAFIQLDTKLSIFETGIKVVDLLAPYRRGGKIGLFGGAGVGKTVLIMELINNIAKAHGGVSVFGGVGERTREGNDLYMEMKESGVINEQNIAESKVALVHGQMNEPPGARMRVGLTALTMAEYFRDVNEQDVLLFIDNIFRFVQAGSEVSALLGRMPSAVGYQPTLSTEMGSLQERITSTKEGSITSIQAVYVPADDLTDPAPATTFAHLDATTVLSRGLAAKGIYPAVDPLDSTSTMLQPRIVGEEHYEIAQRVKQTSQRYKELQDIIAILGLDELSEEDRLTVARARKIERFLSQPFFVAEVFTGSPGKYVGLAETIRGFQLILSGELDGLPEQAFYLVGNIDEATAKAMNLEVESKLKK.

Residue 172–179 (GGAGVGKT) participates in ATP binding.

It belongs to the ATPase alpha/beta chains family. F-type ATPases have 2 components, CF(1) - the catalytic core - and CF(0) - the membrane proton channel. CF(1) has five subunits: alpha(3), beta(3), gamma(1), delta(1), epsilon(1). CF(0) has four main subunits: a(1), b(1), b'(1) and c(9-12).

The protein localises to the plastid. It is found in the chloroplast thylakoid membrane. It carries out the reaction ATP + H2O + 4 H(+)(in) = ADP + phosphate + 5 H(+)(out). Produces ATP from ADP in the presence of a proton gradient across the membrane. The catalytic sites are hosted primarily by the beta subunits. This Calycanthus floridus var. glaucus (Eastern sweetshrub) protein is ATP synthase subunit beta, chloroplastic.